The sequence spans 173 residues: Lipoprotein signal peptidase (173 aa).

Helical transmembrane passes span 14 to 34 (LAWL…KYYF), 44 to 64 (IIVI…AAFS), 72 to 92 (WQRW…VVWL), and 98 to 118 (DDTW…GNLY). Catalysis depends on residues Asp-128 and Asp-147. A helical transmembrane segment spans residues 139–159 (YFPAFNVADSAITVGAIMLAL).

This sequence belongs to the peptidase A8 family.

It localises to the cell inner membrane. The catalysed reaction is Release of signal peptides from bacterial membrane prolipoproteins. Hydrolyzes -Xaa-Yaa-Zaa-|-(S,diacylglyceryl)Cys-, in which Xaa is hydrophobic (preferably Leu), and Yaa (Ala or Ser) and Zaa (Gly or Ala) have small, neutral side chains.. It functions in the pathway protein modification; lipoprotein biosynthesis (signal peptide cleavage). Its function is as follows. This protein specifically catalyzes the removal of signal peptides from prolipoproteins. This Pseudomonas syringae pv. tomato (strain ATCC BAA-871 / DC3000) protein is Lipoprotein signal peptidase.